The sequence spans 145 residues: Cytochrome b (145 aa).

The helical transmembrane segment at 38 to 58 (FFALHFLLPFVLAALALMHLI) threads the bilayer. Heme b-binding residues include His-42 and His-56. A ubiquinone is bound at residue His-61. Residues 85–105 (FIFKDLVTIFIFFIVLSIFVF) form a helical membrane-spanning segment.

The protein belongs to the cytochrome b family. Fungal cytochrome b-c1 complex contains 10 subunits; 3 respiratory subunits, 2 core proteins and 5 low-molecular weight proteins. Cytochrome b-c1 complex is a homodimer. Requires heme b as cofactor.

The protein localises to the mitochondrion inner membrane. Functionally, component of the ubiquinol-cytochrome c reductase complex (complex III or cytochrome b-c1 complex) that is part of the mitochondrial respiratory chain. The b-c1 complex mediates electron transfer from ubiquinol to cytochrome c. Contributes to the generation of a proton gradient across the mitochondrial membrane that is then used for ATP synthesis. This Aspergillus flavus protein is Cytochrome b (cob).